A 523-amino-acid polypeptide reads, in one-letter code: 2-isopropylmalate synthase (523 aa).

Positions 5–267 constitute a Pyruvate carboxyltransferase domain; that stretch reads VIIFDTTLRD…HTNINHHEIW (263 aa). The Mn(2+) site is built by Asp14, His202, His204, and Asn238. Residues 392–523 form a regulatory domain region; the sequence is RLDYFSVQSG…QNKENNKETV (132 aa).

The protein belongs to the alpha-IPM synthase/homocitrate synthase family. LeuA type 1 subfamily. In terms of assembly, homodimer. Mn(2+) is required as a cofactor.

The protein resides in the cytoplasm. The catalysed reaction is 3-methyl-2-oxobutanoate + acetyl-CoA + H2O = (2S)-2-isopropylmalate + CoA + H(+). The protein operates within amino-acid biosynthesis; L-leucine biosynthesis; L-leucine from 3-methyl-2-oxobutanoate: step 1/4. Catalyzes the condensation of the acetyl group of acetyl-CoA with 3-methyl-2-oxobutanoate (2-ketoisovalerate) to form 3-carboxy-3-hydroxy-4-methylpentanoate (2-isopropylmalate). The chain is 2-isopropylmalate synthase from Salmonella dublin (strain CT_02021853).